The following is a 700-amino-acid chain: Hedgehog-interacting protein (700 aa).

The signal sequence occupies residues 1–17 (MLKMLSFKLLLLAVALG). Asn-99 carries N-linked (GlcNAc...) asparagine glycosylation. 10 cysteine pairs are disulfide-bonded: Cys-216/Cys-536, Cys-218/Cys-543, Cys-402/Cys-624, Cys-435/Cys-452, Cys-500/Cys-594, Cys-612/Cys-623, Cys-625/Cys-634, Cys-639/Cys-649, Cys-643/Cys-655, and Cys-657/Cys-666. An interaction with SHH zinc binding site region spans residues 376-388 (LDDMEEMDGLSDF). Asp-383 provides a ligand contact to Zn(2+). Residues Asn-416, Asn-447, and Asn-459 are each glycosylated (N-linked (GlcNAc...) asparagine). EGF-like domains lie at 607 to 634 (DCSR…GDFC) and 635 to 667 (RIAK…PQCE).

Belongs to the HHIP family. As to quaternary structure, interacts with all three hedgehog family members, SHH, IHH and DHH. In the adult brain, high expression found in the ventral cochlear nucleus, medial habenula, indusium griseum and tenia tecta. Some expression also in the caudate putamen, the nucleus accumbens, the ventral pallidum and in the superficial layers of the superior colliculus.

It localises to the cell membrane. It is found in the secreted. In terms of biological role, modulates hedgehog signaling in several cell types, including brain and lung through direct interaction with members of the hedgehog family. Soluble forms inhibit Shh-induced differentiation in the fibroblast cell line C3H/10T1/2. The protein is Hedgehog-interacting protein (Hhip) of Mus musculus (Mouse).